The following is a 231-amino-acid chain: uncharacterized protein (231 aa).

Residue 10-34 (VVTGAGSGIGEAIATLLHEEGAKVV) coordinates NADP(+). S140 provides a ligand contact to substrate. Y153 serves as the catalytic Proton acceptor.

Belongs to the short-chain dehydrogenases/reductases (SDR) family.

This is an uncharacterized protein from Staphylococcus aureus (strain N315).